The following is a 158-amino-acid chain: Putative pre-16S rRNA nuclease (158 aa).

This sequence belongs to the YqgF nuclease family.

It localises to the cytoplasm. In terms of biological role, could be a nuclease involved in processing of the 5'-end of pre-16S rRNA. The chain is Putative pre-16S rRNA nuclease from Hahella chejuensis (strain KCTC 2396).